The chain runs to 380 residues: tRNA(Met) cytidine acetate ligase (380 aa).

ATP contacts are provided by residues Ile-7–His-20, Gly-100, Asn-153, and Arg-178.

This sequence belongs to the TmcAL family.

The protein localises to the cytoplasm. The enzyme catalyses cytidine(34) in elongator tRNA(Met) + acetate + ATP = N(4)-acetylcytidine(34) in elongator tRNA(Met) + AMP + diphosphate. In terms of biological role, catalyzes the formation of N(4)-acetylcytidine (ac(4)C) at the wobble position of elongator tRNA(Met), using acetate and ATP as substrates. First activates an acetate ion to form acetyladenylate (Ac-AMP) and then transfers the acetyl group to tRNA to form ac(4)C34. This chain is tRNA(Met) cytidine acetate ligase, found in Staphylococcus haemolyticus (strain JCSC1435).